Consider the following 763-residue polypeptide: Disintegrin and metalloproteinase domain-containing protein 29 (763 aa).

The first 31 residues, 1–31 (MNMIEALLSMRVLFLTQVFGIFLCFPGLTKA), serve as a signal peptide directing secretion. Positions 32 to 200 (GHLHYHSSIE…ILKQSSFEDW (169 aa)) are excised as a propeptide. 3 N-linked (GlcNAc...) asparagine glycosylation sites follow: asparagine 164, asparagine 177, and asparagine 223. Residues 201-684 (WTHTKIVELV…KTNKKKHFFY (484 aa)) are Extracellular-facing. Positions 205–396 (KIVELVVVVD…NTRCLMENMY (192 aa)) constitute a Peptidase M12B domain. Disulfide bonds link cysteine 313-cysteine 390, cysteine 353-cysteine 375, and cysteine 355-cysteine 360. Residues asparagine 374, asparagine 424, asparagine 434, asparagine 475, and asparagine 584 are each glycosylated (N-linked (GlcNAc...) asparagine). The region spanning 403 to 489 (RTRCGNGVVE…ECPDDAYVED (87 aa)) is the Disintegrin domain. A disulfide bond links cysteine 461 and cysteine 481. 3 disulfides stabilise this stretch: cysteine 631–cysteine 642, cysteine 636–cysteine 648, and cysteine 650–cysteine 659. Positions 631-660 (CTPAFCNYRGICNNKHHCHCNFHWDPPNCM) constitute an EGF-like domain. A helical membrane pass occupies residues 685 to 705 (LLLLQLIILACLLSCLLWLLF). At 706 to 763 (NIKGSKRKPQVQPTPVKTKKVSKKVPSQKPSPVPSPSLPQLRMPSRSASPTSSIKSTN) the chain is on the cytoplasmic side. The disordered stretch occupies residues 712 to 763 (RKPQVQPTPVKTKKVSKKVPSQKPSPVPSPSLPQLRMPSRSASPTSSIKSTN). The segment covering 751–763 (RSASPTSSIKSTN) has biased composition (polar residues).

Its subcellular location is the membrane. May be involved in spermatogenesis and fertilization. Seems to be a non catalytic metalloprotease-like protein. This chain is Disintegrin and metalloproteinase domain-containing protein 29 (Adam29), found in Mus musculus (Mouse).